The following is an 800-amino-acid chain: Nucleolar RNA helicase 2-B (800 aa).

The span at 1-14 shows a compositional bias: basic and acidic residues; it reads MPGKVYTDEMEGKS. The interval 1-200 is disordered; sequence MPGKVYTDEM…TDTSEITAAN (200 aa). Positions 114 to 124 are enriched in polar residues; the sequence is ETNISLSSQGG. The Q motif signature appears at 221–249; it reads GDFSKFPISKDTIKNLQAKGVTYLFPIQS. Positions 252 to 431 constitute a Helicase ATP-binding domain; the sequence is FHTVYSGKDV…KKYMRKQYEK (180 aa). Residue 265–272 participates in ATP binding; the sequence is ARTGTGKT. The DEAD box signature appears at 374–377; sequence DEVD. A Helicase C-terminal domain is found at 464 to 620; it reads DIVQVYSGSH…SSADAIKSLD (157 aa). A disordered region spans residues 750–800; that stretch reads IQESERSFDGPRNRSFGGRGRRPFDRRNNSRNSSGGGGGRRGRSGGFRRGR. The span at 752-761 shows a compositional bias: basic and acidic residues; it reads ESERSFDGPR. The span at 789–800 shows a compositional bias: basic residues; it reads RRGRSGGFRRGR.

The protein belongs to the DEAD box helicase family. DDX21/DDX50 subfamily. Widely expressed. Expressed at higher level in stomach. Expressed at lower level compared to ddx21-a.

It localises to the nucleus. It is found in the nucleolus. The protein resides in the nucleoplasm. The protein localises to the cytoplasm. Its subcellular location is the cytosol. It localises to the mitochondrion. It carries out the reaction ATP + H2O = ADP + phosphate + H(+). Functionally, RNA helicase that acts as a sensor of the transcriptional status of both RNA polymerase (Pol) I and II: promotes ribosomal RNA (rRNA) processing and transcription from polymerase II (Pol II). Binds various RNAs, such as rRNAs, snoRNAs, 7SK and, at lower extent, mRNAs. In the nucleolus, localizes to rDNA locus, where it directly binds rRNAs and snoRNAs, and promotes rRNA transcription, processing and modification. Required for rRNA 2'-O-methylation, possibly by promoting the recruitment of late-acting snoRNAs SNORD56 and SNORD58 with pre-ribosomal complexes. In the nucleoplasm, binds 7SK RNA and is recruited to the promoters of Pol II-transcribed genes: acts by facilitating the release of P-TEFb from inhibitory 7SK snRNP in a manner that is dependent on its helicase activity, thereby promoting transcription of its target genes. Required to prevent R-loop-associated DNA damage and transcription-associated genomic instability. This is Nucleolar RNA helicase 2-B (ddx21-b) from Xenopus laevis (African clawed frog).